The primary structure comprises 301 residues: Methionine aminopeptidase (301 aa).

Substrate is bound at residue histidine 65. Residues aspartate 85, aspartate 96, and histidine 156 each contribute to the a divalent metal cation site. Histidine 164 serves as a coordination point for substrate. A divalent metal cation contacts are provided by glutamate 189 and glutamate 284.

Belongs to the peptidase M24A family. Methionine aminopeptidase archaeal type 2 subfamily. As to quaternary structure, monomer. Requires Co(2+) as cofactor. The cofactor is Zn(2+). It depends on Mn(2+) as a cofactor. Fe(2+) serves as cofactor.

It catalyses the reaction Release of N-terminal amino acids, preferentially methionine, from peptides and arylamides.. Functionally, removes the N-terminal methionine from nascent proteins. The N-terminal methionine is often cleaved when the second residue in the primary sequence is small and uncharged (Met-Ala-, Cys, Gly, Pro, Ser, Thr, or Val). The polypeptide is Methionine aminopeptidase (Saccharolobus solfataricus (strain ATCC 35092 / DSM 1617 / JCM 11322 / P2) (Sulfolobus solfataricus)).